A 236-amino-acid chain; its full sequence is ATP synthase subunit a (236 aa).

Transmembrane regions (helical) follow at residues 17 to 37 (LANVLMITVTSVIVFVIAVLA), 80 to 100 (MTLIMYIFVANMLGLPFSVVI), 114 to 134 (VVTLTLATMVVALSHYYGIKL), 179 to 199 (ILLALLAGSLATGVGGTIAAI), and 208 to 228 (FSIFVGAIQAFIFTMLTMVYM).

The protein belongs to the ATPase A chain family. In terms of assembly, F-type ATPases have 2 components, CF(1) - the catalytic core - and CF(0) - the membrane proton channel. CF(1) has five subunits: alpha(3), beta(3), gamma(1), delta(1), epsilon(1). CF(0) has three main subunits: a(1), b(2) and c(9-12). The alpha and beta chains form an alternating ring which encloses part of the gamma chain. CF(1) is attached to CF(0) by a central stalk formed by the gamma and epsilon chains, while a peripheral stalk is formed by the delta and b chains.

The protein resides in the cell membrane. Its function is as follows. Key component of the proton channel; it plays a direct role in the translocation of protons across the membrane. The chain is ATP synthase subunit a from Anoxybacillus flavithermus (strain DSM 21510 / WK1).